We begin with the raw amino-acid sequence, 309 residues long: HPr kinase/phosphorylase (309 aa).

Active-site residues include His138 and Lys159. Gly153–Ser160 is an ATP binding site. Ser160 contributes to the Mg(2+) binding site. Asp177 serves as the catalytic Proton acceptor; for phosphorylation activity. Proton donor; for dephosphorylation activity. The tract at residues Leu201–Asp210 is important for the catalytic mechanism of both phosphorylation and dephosphorylation. Glu202 provides a ligand contact to Mg(2+). Arg243 is a catalytic residue. An important for the catalytic mechanism of dephosphorylation region spans residues Pro264–Arg269.

This sequence belongs to the HPrK/P family. Homohexamer. Requires Mg(2+) as cofactor.

It catalyses the reaction [HPr protein]-L-serine + ATP = [HPr protein]-O-phospho-L-serine + ADP + H(+). The enzyme catalyses [HPr protein]-O-phospho-L-serine + phosphate + H(+) = [HPr protein]-L-serine + diphosphate. Its function is as follows. Catalyzes the ATP- as well as the pyrophosphate-dependent phosphorylation of a specific serine residue in HPr, a phosphocarrier protein of the phosphoenolpyruvate-dependent sugar phosphotransferase system (PTS). HprK/P also catalyzes the pyrophosphate-producing, inorganic phosphate-dependent dephosphorylation (phosphorolysis) of seryl-phosphorylated HPr (P-Ser-HPr). The two antagonistic activities of HprK/P are regulated by several intracellular metabolites, which change their concentration in response to the absence or presence of rapidly metabolisable carbon sources (glucose, fructose, etc.) in the growth medium. Therefore, by controlling the phosphorylation state of HPr, HPrK/P is a sensor enzyme that plays a major role in the regulation of carbon metabolism and sugar transport: it mediates carbon catabolite repression (CCR), and regulates PTS-catalyzed carbohydrate uptake and inducer exclusion. The sequence is that of HPr kinase/phosphorylase from Streptococcus thermophilus (strain CNRZ 1066).